The following is a 388-amino-acid chain: Chorismate synthase (388 aa).

R39 and R45 together coordinate NADP(+). FMN-binding positions include 130–132 (RSS), 251–252 (NA), G296, 311–315 (KPIPT), and R337.

Belongs to the chorismate synthase family. Homotetramer. It depends on FMNH2 as a cofactor.

The enzyme catalyses 5-O-(1-carboxyvinyl)-3-phosphoshikimate = chorismate + phosphate. Its pathway is metabolic intermediate biosynthesis; chorismate biosynthesis; chorismate from D-erythrose 4-phosphate and phosphoenolpyruvate: step 7/7. In terms of biological role, catalyzes the anti-1,4-elimination of the C-3 phosphate and the C-6 proR hydrogen from 5-enolpyruvylshikimate-3-phosphate (EPSP) to yield chorismate, which is the branch point compound that serves as the starting substrate for the three terminal pathways of aromatic amino acid biosynthesis. This reaction introduces a second double bond into the aromatic ring system. This chain is Chorismate synthase, found in Streptococcus agalactiae serotype Ia (strain ATCC 27591 / A909 / CDC SS700).